Here is a 144-residue protein sequence, read N- to C-terminus: Large ribosomal subunit protein uL13 (144 aa).

This sequence belongs to the universal ribosomal protein uL13 family. In terms of assembly, part of the 50S ribosomal subunit.

In terms of biological role, this protein is one of the early assembly proteins of the 50S ribosomal subunit, although it is not seen to bind rRNA by itself. It is important during the early stages of 50S assembly. The polypeptide is Large ribosomal subunit protein uL13 (Natronomonas pharaonis (strain ATCC 35678 / DSM 2160 / CIP 103997 / JCM 8858 / NBRC 14720 / NCIMB 2260 / Gabara) (Halobacterium pharaonis)).